We begin with the raw amino-acid sequence, 154 residues long: MTTTTTFKGVDPNSRNSSRVLRPPGGGSNFSLGFDEPTEQPVRKNKMASNIFGTPEENQASWAKSAGAKSSGGREDLESSGLQRRNSSEASSGDFLDLKGEGDIHENVDTDLPGSLGQSEEKPVPAAPVPSPVAPAPVPSRRNPPGGKSSLVLG.

The residue at position 1 (Met-1) is an N-acetylmethionine. Residues 1 to 19 (MTTTTTFKGVDPNSRNSSR) are compositionally biased toward polar residues. The segment at 1–154 (MTTTTTFKGV…PGGKSSLVLG (154 aa)) is disordered. Thr-2 is subject to N-acetylthreonine; in Hematological and neurological expressed 1 protein, N-terminally processed. A phosphoserine mark is found at Ser-28 and Ser-31. The segment covering 47-59 (MASNIFGTPEENQ) has biased composition (polar residues). Thr-54 carries the phosphothreonine modification. The span at 60-71 (ASWAKSAGAKSS) shows a compositional bias: low complexity. 5 positions are modified to phosphoserine: Ser-71, Ser-80, Ser-87, Ser-88, and Ser-92. Polar residues predominate over residues 80 to 91 (SGLQRRNSSEAS). Residues 96–108 (LDLKGEGDIHENV) are compositionally biased toward basic and acidic residues. Positions 125–138 (PAAPVPSPVAPAPV) are enriched in pro residues. At Ser-131 the chain carries Phosphoserine. The residue at position 148 (Lys-148) is an N6-acetyllysine.

The protein belongs to the JUPITER family. As to quaternary structure, interacts with the complex composed, at least, of APC, CTNNB1 and GSK3B; the interaction takes place with the inactive form of GSK3B (phosphorylated at 'Ser-9'). As to expression, expressed in testis, skeletal muscle, thymus, prostate, colon, peripheral blood cells, brain and placenta.

It localises to the nucleus. Its subcellular location is the cytoplasm. Modulates negatively AKT-mediated GSK3B signaling. Induces CTNNB1 'Ser-33' phosphorylation and degradation through the suppression of the inhibitory 'Ser-9' phosphorylation of GSK3B, which represses the function of the APC:CTNNB1:GSK3B complex and the interaction with CDH1/E-cadherin in adherent junctions. Plays a role in the regulation of cell cycle and cell adhesion. Has an inhibitory role on AR-signaling pathway through the induction of receptor proteasomal degradation. In Homo sapiens (Human), this protein is Jupiter microtubule associated homolog 1.